Consider the following 567-residue polypeptide: Pyruvate decarboxylase (567 aa).

Aspartate 28 and histidine 117 together coordinate pyruvate. Residues threonine 393 and 416 to 418 contribute to the thiamine diphosphate site; that span reads GSI. Aspartate 447 lines the Mg(2+) pocket. Thiamine diphosphate-binding positions include 448–449 and 475–480; these read GS and NDGYTI. Positions 475 and 477 each coordinate Mg(2+). Pyruvate is bound at residue glutamate 481.

It belongs to the TPP enzyme family. As to quaternary structure, homotetramer. Mg(2+) serves as cofactor. It depends on thiamine diphosphate as a cofactor.

It is found in the cytoplasm. The catalysed reaction is a 2-oxocarboxylate + H(+) = an aldehyde + CO2. It catalyses the reaction pyruvate + H(+) = acetaldehyde + CO2. This Candida albicans (strain SC5314 / ATCC MYA-2876) (Yeast) protein is Pyruvate decarboxylase (PDC11).